Reading from the N-terminus, the 274-residue chain is Diaminopimelate epimerase (274 aa).

Substrate-binding residues include N13, Q47, and N65. C74 acts as the Proton donor in catalysis. Substrate contacts are provided by residues 75–76 (GN), N149, N182, and 200–201 (ER). The active-site Proton acceptor is C209. 210 to 211 (GT) provides a ligand contact to substrate.

This sequence belongs to the diaminopimelate epimerase family. In terms of assembly, homodimer.

It is found in the cytoplasm. The enzyme catalyses (2S,6S)-2,6-diaminopimelate = meso-2,6-diaminopimelate. It functions in the pathway amino-acid biosynthesis; L-lysine biosynthesis via DAP pathway; DL-2,6-diaminopimelate from LL-2,6-diaminopimelate: step 1/1. Catalyzes the stereoinversion of LL-2,6-diaminopimelate (L,L-DAP) to meso-diaminopimelate (meso-DAP), a precursor of L-lysine and an essential component of the bacterial peptidoglycan. The protein is Diaminopimelate epimerase of Rhizorhabdus wittichii (strain DSM 6014 / CCUG 31198 / JCM 15750 / NBRC 105917 / EY 4224 / RW1) (Sphingomonas wittichii).